Here is a 969-residue protein sequence, read N- to C-terminus: Exoribonuclease II, mitochondrial (969 aa).

Residues 1 to 41 constitute a mitochondrion transit peptide; that stretch reads MVVRRKVHVLLIARSFHSYTPCFRVTTRGKRQRSKSKQQAK. The segment covering 28–38 has biased composition (basic residues); sequence RGKRQRSKSKQ. The segment at 28-54 is disordered; that stretch reads RGKRQRSKSKQQAKVELDHTRELDNDQ. Basic and acidic residues predominate over residues 40–51; that stretch reads AKVELDHTRELD. In terms of domain architecture, RNB spans 522-853; the sequence is RYDFGDLRVF…NHLQIHRHLQ (332 aa).

The protein belongs to the RNR ribonuclease family. MSU1 and SUV3 are the two components of the mitochondrial degradosome (mtEXO).

The protein resides in the mitochondrion matrix. It carries out the reaction Exonucleolytic cleavage in the 3'- to 5'-direction to yield nucleoside 5'-phosphates.. Its function is as follows. Essential for mitochondrial biogenesis. Functionally, required for intron-independent turnover and processing of mitochondrial RNA. Participates in 3' mtRNA processing where it hydrolyzes single-stranded RNA or partially double-stranded RNA with 3' single-stranded tails. The protein is Exoribonuclease II, mitochondrial (DSS1) of Saccharomyces cerevisiae (strain ATCC 204508 / S288c) (Baker's yeast).